A 195-amino-acid polypeptide reads, in one-letter code: Thioredoxin reductase-like selenoprotein T (195 aa).

Positions 1–19 (MRLLLLLLVAASAVVRSEA) are cleaved as a signal peptide. A cross-link (cysteinyl-selenocysteine (Cys-Sec)) is located at residues 46–49 (CVSU). Sec49 is a non-standard amino acid (selenocysteine). Residues 85 to 103 (IASFLSVFKLVLIGLIIVG) form a helical membrane-spanning segment.

This sequence belongs to the SelWTH family. Selenoprotein T subfamily. Post-translationally, may contain a selenide-sulfide bond between Cys-46 and Sec-49. This bond is speculated to serve as redox-active pair. In terms of tissue distribution, ubiquitous. Highly expressed in the endocrine pancreas. Expressed at low levels in the adult brain.

The protein resides in the endoplasmic reticulum membrane. The enzyme catalyses [thioredoxin]-dithiol + NADP(+) = [thioredoxin]-disulfide + NADPH + H(+). Its function is as follows. Selenoprotein with thioredoxin reductase-like oxidoreductase activity. Protects dopaminergic neurons against oxidative stress and cell death. Involved in ADCYAP1/PACAP-induced calcium mobilization and neuroendocrine secretion. Plays a role in fibroblast anchorage and redox regulation. In gastric smooth muscle, modulates the contraction processes through the regulation of calcium release and MYLK activation. In pancreatic islets, involved in the control of glucose homeostasis, contributes to prolonged ADCYAP1/PACAP-induced insulin secretion. The sequence is that of Thioredoxin reductase-like selenoprotein T from Mus musculus (Mouse).